The chain runs to 176 residues: NAD(P)H-quinone oxidoreductase subunit J (176 aa).

Composition is skewed to polar residues over residues 1–12 and 20–30; these read MEKDSQATSSDT and ISQSLSKDGIP. A disordered region spans residues 1–30; the sequence is MEKDSQATSSDTSIEKEGVISQSLSKDGIP.

The protein belongs to the complex I 30 kDa subunit family. NDH-1 can be composed of about 15 different subunits; different subcomplexes with different compositions have been identified which probably have different functions.

The protein localises to the cellular thylakoid membrane. The catalysed reaction is a plastoquinone + NADH + (n+1) H(+)(in) = a plastoquinol + NAD(+) + n H(+)(out). The enzyme catalyses a plastoquinone + NADPH + (n+1) H(+)(in) = a plastoquinol + NADP(+) + n H(+)(out). In terms of biological role, NDH-1 shuttles electrons from an unknown electron donor, via FMN and iron-sulfur (Fe-S) centers, to quinones in the respiratory and/or the photosynthetic chain. The immediate electron acceptor for the enzyme in this species is believed to be plastoquinone. Couples the redox reaction to proton translocation, and thus conserves the redox energy in a proton gradient. Cyanobacterial NDH-1 also plays a role in inorganic carbon-concentration. In Prochlorococcus marinus (strain AS9601), this protein is NAD(P)H-quinone oxidoreductase subunit J.